Consider the following 474-residue polypeptide: Ribulose bisphosphate carboxylase large chain (474 aa).

Residues asparagine 122 and threonine 172 each coordinate substrate. Residue lysine 174 is the Proton acceptor of the active site. A substrate-binding site is contributed by lysine 176. Residues lysine 200, aspartate 202, and glutamate 203 each coordinate Mg(2+). Lysine 200 is subject to N6-carboxylysine. The active-site Proton acceptor is histidine 293. Substrate contacts are provided by arginine 294, histidine 326, and serine 378.

This sequence belongs to the RuBisCO large chain family. Type I subfamily. Heterohexadecamer of 8 large chains and 8 small chains; disulfide-linked. The disulfide link is formed within the large subunit homodimers. It depends on Mg(2+) as a cofactor. Post-translationally, the disulfide bond which can form in the large chain dimeric partners within the hexadecamer appears to be associated with oxidative stress and protein turnover.

The protein resides in the carboxysome. The enzyme catalyses 2 (2R)-3-phosphoglycerate + 2 H(+) = D-ribulose 1,5-bisphosphate + CO2 + H2O. It carries out the reaction D-ribulose 1,5-bisphosphate + O2 = 2-phosphoglycolate + (2R)-3-phosphoglycerate + 2 H(+). In terms of biological role, ruBisCO catalyzes two reactions: the carboxylation of D-ribulose 1,5-bisphosphate, the primary event in carbon dioxide fixation, as well as the oxidative fragmentation of the pentose substrate in the photorespiration process. Both reactions occur simultaneously and in competition at the same active site. The chain is Ribulose bisphosphate carboxylase large chain from Synechococcus sp. (strain JA-3-3Ab) (Cyanobacteria bacterium Yellowstone A-Prime).